The chain runs to 287 residues: MNSSTRIFALLGRAVDYSYSPLIHNTAFQALGLPYHYTIFNIAEAALVGDALRGARALGLGGFSVTIPYKQTVVPFLDELSEEATTIQAVNCIVNKNGKLIGYNTDILGFASPLFAYREALHGATIALFGSGGAALAAIEAFQRYFTPKQVLLFARDSQKAKSQLRSSLALERYTNLAIVPLSDYERVRECRLVINATPLGTKGRADGSAIIPLESNLLHSEHIVYDMVYNPTITPLLQAAQAVGASTIFGIEMLIGQAEQAFTLWTGEKMPTELVRQTVMAKLQEL.

Residues 18–20 (SYS) and T66 contribute to the shikimate site. The active-site Proton acceptor is the K70. E82 is an NADP(+) binding site. Residues N91 and D106 each coordinate shikimate. NADP(+)-binding positions include 130–134 (GSGGA) and M228. Y230 contributes to the shikimate binding site. G251 contributes to the NADP(+) binding site.

It belongs to the shikimate dehydrogenase family. Homodimer.

The catalysed reaction is shikimate + NADP(+) = 3-dehydroshikimate + NADPH + H(+). It participates in metabolic intermediate biosynthesis; chorismate biosynthesis; chorismate from D-erythrose 4-phosphate and phosphoenolpyruvate: step 4/7. In terms of biological role, involved in the biosynthesis of the chorismate, which leads to the biosynthesis of aromatic amino acids. Catalyzes the reversible NADPH linked reduction of 3-dehydroshikimate (DHSA) to yield shikimate (SA). In Chlorobium chlorochromatii (strain CaD3), this protein is Shikimate dehydrogenase (NADP(+)).